Here is a 388-residue protein sequence, read N- to C-terminus: Biotin synthase (388 aa).

Residues 47–277 enclose the Radical SAM core domain; that stretch reads WFGRRVKLNY…DVEVRIAGGR (231 aa). Positions 65, 69, and 72 each coordinate [4Fe-4S] cluster. [2Fe-2S] cluster is bound by residues Cys-109, Cys-142, Cys-202, and Arg-272. The disordered stretch occupies residues 335–371; it reads APAGGCGSEQSAGCGSHEGGGACGSAPAPRTDEARTD.

This sequence belongs to the radical SAM superfamily. Biotin synthase family. Homodimer. It depends on [4Fe-4S] cluster as a cofactor. The cofactor is [2Fe-2S] cluster.

It carries out the reaction (4R,5S)-dethiobiotin + (sulfur carrier)-SH + 2 reduced [2Fe-2S]-[ferredoxin] + 2 S-adenosyl-L-methionine = (sulfur carrier)-H + biotin + 2 5'-deoxyadenosine + 2 L-methionine + 2 oxidized [2Fe-2S]-[ferredoxin]. Its pathway is cofactor biosynthesis; biotin biosynthesis; biotin from 7,8-diaminononanoate: step 2/2. Catalyzes the conversion of dethiobiotin (DTB) to biotin by the insertion of a sulfur atom into dethiobiotin via a radical-based mechanism. This chain is Biotin synthase, found in Streptomyces avermitilis (strain ATCC 31267 / DSM 46492 / JCM 5070 / NBRC 14893 / NCIMB 12804 / NRRL 8165 / MA-4680).